Consider the following 601-residue polypeptide: Group B oligopeptidase PepB (601 aa).

Residue His-386 coordinates Zn(2+). Residue Glu-387 is part of the active site. Zn(2+)-binding residues include His-390 and His-393.

The protein belongs to the peptidase M3B family. Requires Zn(2+) as cofactor.

The protein localises to the cytoplasm. In terms of biological role, has oligopeptidase activity and degrades a variety of small bioactive peptides, including bradykinin, neurotensin, and peptide fragments of substance P and adrenocorticotropin. Also hydrolyzes the synthetic collagen-like substrate N-(3-[2-furyl]acryloyl)-Leu-Gly-Pro-Ala (FALGPA). This is Group B oligopeptidase PepB (pepB) from Streptococcus agalactiae serotype III (strain NEM316).